The primary structure comprises 467 residues: Histidine--tRNA ligase (467 aa).

This sequence belongs to the class-II aminoacyl-tRNA synthetase family. As to quaternary structure, homodimer.

Its subcellular location is the cytoplasm. It carries out the reaction tRNA(His) + L-histidine + ATP = L-histidyl-tRNA(His) + AMP + diphosphate + H(+). The sequence is that of Histidine--tRNA ligase from Gloeobacter violaceus (strain ATCC 29082 / PCC 7421).